We begin with the raw amino-acid sequence, 308 residues long: Dual oxidase maturation factor 1 (308 aa).

The Extracellular portion of the chain corresponds to 1–21; that stretch reads MQANIFPFYPQPRTSFKFDTK. A helical transmembrane segment spans residues 22 to 42; that stretch reads IIEIIIICIVTACTFIIILPG. The Cytoplasmic segment spans residues 43 to 49; the sequence is IRGKSRS. A helical transmembrane segment spans residues 50-70; the sequence is IWLFRILTSLFIGAVILAVNF. Residues 71–172 are Extracellular-facing; the sequence is TSDWETGIVT…SPCGLFQQYC (102 aa). Residues N94, N107, and N119 are each glycosylated (N-linked (GlcNAc...) asparagine). The chain crosses the membrane as a helical span at residues 173–195; the sequence is ISTYYSSEIMWVAFGSWILYNVL. The Cytoplasmic portion of the chain corresponds to 196–199; that stretch reads FSMP. The chain crosses the membrane as a helical span at residues 200 to 220; sequence VILYGICMMFVTAICMLVSLI. Residues 221–247 lie on the Extracellular side of the membrane; it reads SFASVRQAPVCNIHFGNAVLKTHFGVS. A helical transmembrane segment spans residues 248–268; sequence YWLSLVTGLFCLIVSLVLLFL. Topologically, residues 269-308 are cytoplasmic; the sequence is YKTQPKVIRLIFSYGEEEDLSDKSENEEEHSSALSLNEML.

The protein belongs to the DUOXA family.

It is found in the membrane. Possible role in maturation and transport from the endoplasmic reticulum to the plasma membrane of functional dual oxidase. This is Dual oxidase maturation factor 1 (duoxa1) from Xenopus tropicalis (Western clawed frog).